The primary structure comprises 356 residues: Protein pelota homolog (356 aa).

This sequence belongs to the eukaryotic release factor 1 family. Pelota subfamily. As to quaternary structure, monomer. Requires a divalent metal cation as cofactor.

Its subcellular location is the cytoplasm. May function in recognizing stalled ribosomes, interact with stem-loop structures in stalled mRNA molecules, and effect endonucleolytic cleavage of the mRNA. May play a role in the release non-functional ribosomes and degradation of damaged mRNAs. Has endoribonuclease activity. The protein is Protein pelota homolog of Pyrococcus horikoshii (strain ATCC 700860 / DSM 12428 / JCM 9974 / NBRC 100139 / OT-3).